A 248-amino-acid polypeptide reads, in one-letter code: uncharacterized protein (248 aa).

A helical membrane pass occupies residues 30 to 50 (LIALAIFIGLIAIFMFGCKAA). Disordered regions lie at residues 59–91 (NRDTTQSDTDVIYPRDDPRASRSHQNFGFMDPP) and 208–248 (TTES…VSTR). Polar residues-rich tracts occupy residues 210-220 (ESPAPAQSTSN) and 239-248 (SLHNETVSTR).

It localises to the membrane. This is an uncharacterized protein from Caenorhabditis elegans.